The following is a 396-amino-acid chain: Digeranylgeranylglycerophospholipid reductase (396 aa).

FAD-binding residues include Gly14, Glu33, Cys44, Gly45, Gly47, Arg100, Ala124, Glu162, Asp283, Gly295, and Ile296. Lys338 and Val374 together coordinate a 2,3-bis-O-(geranylgeranyl)-sn-glycerol 1-phospholipid.

The protein belongs to the geranylgeranyl reductase family. DGGGPL reductase subfamily. Monomer. FAD serves as cofactor.

The protein localises to the cell membrane. The catalysed reaction is 2,3-bis-O-(phytanyl)-sn-glycerol 1-phosphate + 8 NADP(+) = 2,3-bis-O-(geranylgeranyl)-sn-glycerol 1-phosphate + 8 NADPH + 8 H(+). It catalyses the reaction 2,3-bis-O-(phytanyl)-sn-glycerol 1-phosphate + 8 NAD(+) = 2,3-bis-O-(geranylgeranyl)-sn-glycerol 1-phosphate + 8 NADH + 8 H(+). It carries out the reaction a 2,3-bis-O-phytanyl-sn-glycerol 1-phospholipid + 8 A = a 2,3-bis-O-(geranylgeranyl)-sn-glycerol 1-phospholipid + 8 AH2. The enzyme catalyses CDP-2,3-bis-O-(geranylgeranyl)-sn-glycerol + 8 AH2 = CDP-2,3-bis-O-(phytanyl)-sn-glycerol + 8 A. The catalysed reaction is archaetidylserine + 8 AH2 = 2,3-bis-O-phytanyl-sn-glycero-3-phospho-L-serine + 8 A. The protein operates within membrane lipid metabolism; glycerophospholipid metabolism. Its function is as follows. Is involved in the reduction of 2,3-digeranylgeranylglycerophospholipids (unsaturated archaeols) into 2,3-diphytanylglycerophospholipids (saturated archaeols) in the biosynthesis of archaeal membrane lipids. Catalyzes the formation of archaetidic acid (2,3-di-O-phytanyl-sn-glyceryl phosphate) from 2,3-di-O-geranylgeranylglyceryl phosphate (DGGGP) via the hydrogenation of each double bond of the isoprenoid chains. Can use both NADH and NADPH as electron donors. Also catalyzes the reduction of 2,3-di-O-geranylgeranylglyceryl phosphate analogs such as 2,3-di-O-phytyl-sn-glyceryl phosphate (DPHGP), 3-O-(2,3-di-O-phytyl-sn-glycero-phospho)-sn-glycerol (DPHGPG) and 2,3-di-O-phytyl-sn-glycero-phosphoethanolamine (DPHGPE). Is not active toward 2,3-di-O-geranylgeranylglycerol. Is also probably able to reduce double bonds of geranyl groups in CDP-2,3-bis-O-(geranylgeranyl)-sn-glycerol and archaetidylserine, thus acting at various stages in the biosynthesis of archaeal membrane lipids. The protein is Digeranylgeranylglycerophospholipid reductase of Thermoplasma acidophilum (strain ATCC 25905 / DSM 1728 / JCM 9062 / NBRC 15155 / AMRC-C165).